Reading from the N-terminus, the 610-residue chain is MDAPEESIRMTSDPQSKIYVQNPDTHIHLEQGPSAKSGNGRALVLCSVSVACLSGLLMGYEMSLISGALLQLRDVLTLSCPEQEQVVGSLLLGAFLLSLGGGTILDHYGRRFTIILTALLCVLGTLLSVCVVSFWALVVGRMLVGMSVALSGTASCLYAAEVAPAAWRGRCVCVYELMVVLGMLLGFGLSWAFAGVPDGWRFTFGGALLPALLQAGVMPLLPDSPRFLLAQQREKEAHATLLRLRAGIKEVEPVEDELRAIRLAMGAERLHGFLDLFQSRDNMLQRLLVGAALVFLQQATGQPNILAYASTVLSSVGFHGNEAATLASTGFGVVKVGGTIPAIFLVDKVGPKALLCVGVVVMMLSTATLGAITMQSRTHVSSLCRGPGNTANFTLFETGDETDIQTNTPLGLYQPQNKLKTNTFLTSINDTREHWILNHTYNHRTALMETAELSKKDSAKIALQSLHEVSPSLKWISLVSLLVYVAGFSISLGPMVHVVLSAIFPTGIRGKAVSVISAFNWATNLLISMTFLTLTERIGLPTVIFSYSAMSFLLVVFVIVFVPETKGRSLEQISKELAMKNHLRGTLLCHRRKHKATAQPSQEEKALATV.

Residues 1–49 (MDAPEESIRMTSDPQSKIYVQNPDTHIHLEQGPSAKSGNGRALVLCSVS) lie on the Cytoplasmic side of the membrane. Residues 50 to 70 (VACLSGLLMGYEMSLISGALL) form a helical membrane-spanning segment. The Extracellular segment spans residues 71–84 (QLRDVLTLSCPEQE). Residues 85–105 (QVVGSLLLGAFLLSLGGGTIL) traverse the membrane as a helical segment. Residues 106–118 (DHYGRRFTIILTA) lie on the Cytoplasmic side of the membrane. Residues 119–139 (LLCVLGTLLSVCVVSFWALVV) traverse the membrane as a helical segment. Topologically, residues 140–141 (GR) are extracellular. A helical membrane pass occupies residues 142 to 162 (MLVGMSVALSGTASCLYAAEV). Over 163–176 (APAAWRGRCVCVYE) the chain is Cytoplasmic. Residues 177-197 (LMVVLGMLLGFGLSWAFAGVP) traverse the membrane as a helical segment. The Extracellular portion of the chain corresponds to 198–201 (DGWR). A helical membrane pass occupies residues 202–222 (FTFGGALLPALLQAGVMPLLP). The Cytoplasmic segment spans residues 223–286 (DSPRFLLAQQ…FQSRDNMLQR (64 aa)). Residues 287-307 (LLVGAALVFLQQATGQPNILA) form a helical membrane-spanning segment. Topologically, residues 308-325 (YASTVLSSVGFHGNEAAT) are extracellular. The helical transmembrane segment at 326–346 (LASTGFGVVKVGGTIPAIFLV) threads the bilayer. The Cytoplasmic portion of the chain corresponds to 347–353 (DKVGPKA). A helical membrane pass occupies residues 354–374 (LLCVGVVVMMLSTATLGAITM). Topologically, residues 375–475 (QSRTHVSSLC…LHEVSPSLKW (101 aa)) are extracellular. N-linked (GlcNAc...) asparagine glycosylation is found at Asn392, Asn429, and Asn438. A helical membrane pass occupies residues 476–496 (ISLVSLLVYVAGFSISLGPMV). At 497–511 (HVVLSAIFPTGIRGK) the chain is on the cytoplasmic side. A helical membrane pass occupies residues 512 to 532 (AVSVISAFNWATNLLISMTFL). Topologically, residues 533-542 (TLTERIGLPT) are extracellular. Residues 543-563 (VIFSYSAMSFLLVVFVIVFVP) traverse the membrane as a helical segment. The Cytoplasmic segment spans residues 564–610 (ETKGRSLEQISKELAMKNHLRGTLLCHRRKHKATAQPSQEEKALATV).

Belongs to the major facilitator superfamily. Sugar transporter (TC 2.A.1.1) family. Glucose transporter subfamily. In terms of tissue distribution, expressed in the main insulin-sensitive tissues, such as cardiac muscle, skeletal muscle and adipose tissue.

It localises to the cell membrane. Its subcellular location is the endomembrane system. The protein resides in the cytoplasm. It is found in the perinuclear region. The catalysed reaction is D-glucose(out) = D-glucose(in). Insulin-regulated facilitative glucose transporter. In Danio rerio (Zebrafish), this protein is Solute carrier family 2, facilitated glucose transporter member 12.